A 364-amino-acid chain; its full sequence is DNA polymerase IV (364 aa).

Positions 14–198 (IIHIDMDAFF…LPVEKFHGVG (185 aa)) constitute a UmuC domain. Mg(2+) is bound by residues Asp18 and Asp116. Glu117 is a catalytic residue.

Belongs to the DNA polymerase type-Y family. In terms of assembly, monomer. Mg(2+) serves as cofactor.

Its subcellular location is the cytoplasm. It carries out the reaction DNA(n) + a 2'-deoxyribonucleoside 5'-triphosphate = DNA(n+1) + diphosphate. Poorly processive, error-prone DNA polymerase involved in untargeted mutagenesis. Copies undamaged DNA at stalled replication forks, which arise in vivo from mismatched or misaligned primer ends. These misaligned primers can be extended by PolIV. Exhibits no 3'-5' exonuclease (proofreading) activity. May be involved in translesional synthesis, in conjunction with the beta clamp from PolIII. The sequence is that of DNA polymerase IV from Lactococcus lactis subsp. cremoris (strain MG1363).